Reading from the N-terminus, the 103-residue chain is Large ribosomal subunit protein uL24 (103 aa).

This sequence belongs to the universal ribosomal protein uL24 family. Part of the 50S ribosomal subunit.

Functionally, one of two assembly initiator proteins, it binds directly to the 5'-end of the 23S rRNA, where it nucleates assembly of the 50S subunit. One of the proteins that surrounds the polypeptide exit tunnel on the outside of the subunit. This is Large ribosomal subunit protein uL24 from Vesicomyosocius okutanii subsp. Calyptogena okutanii (strain HA).